The primary structure comprises 123 residues: Small ribosomal subunit protein uS12 (123 aa).

3-methylthioaspartic acid is present on Asp-89.

The protein belongs to the universal ribosomal protein uS12 family. In terms of assembly, part of the 30S ribosomal subunit. Contacts proteins S8 and S17. May interact with IF1 in the 30S initiation complex.

Its function is as follows. With S4 and S5 plays an important role in translational accuracy. Functionally, interacts with and stabilizes bases of the 16S rRNA that are involved in tRNA selection in the A site and with the mRNA backbone. Located at the interface of the 30S and 50S subunits, it traverses the body of the 30S subunit contacting proteins on the other side and probably holding the rRNA structure together. The combined cluster of proteins S8, S12 and S17 appears to hold together the shoulder and platform of the 30S subunit. The chain is Small ribosomal subunit protein uS12 from Gluconobacter oxydans (strain 621H) (Gluconobacter suboxydans).